Reading from the N-terminus, the 598-residue chain is Aspartate--tRNA(Asp/Asn) ligase (598 aa).

Glutamate 177 contacts L-aspartate. The interval 201-204 (QLFK) is aspartate. Residue arginine 223 coordinates L-aspartate. ATP-binding positions include 223 to 225 (RDE) and glutamine 232. Histidine 456 contributes to the L-aspartate binding site. Glutamate 493 contacts ATP. Position 500 (arginine 500) interacts with L-aspartate. 545-548 (GVDR) is a binding site for ATP.

Belongs to the class-II aminoacyl-tRNA synthetase family. Type 1 subfamily. In terms of assembly, homodimer.

The protein resides in the cytoplasm. The catalysed reaction is tRNA(Asx) + L-aspartate + ATP = L-aspartyl-tRNA(Asx) + AMP + diphosphate. Functionally, aspartyl-tRNA synthetase with relaxed tRNA specificity since it is able to aspartylate not only its cognate tRNA(Asp) but also tRNA(Asn). Reaction proceeds in two steps: L-aspartate is first activated by ATP to form Asp-AMP and then transferred to the acceptor end of tRNA(Asp/Asn). The protein is Aspartate--tRNA(Asp/Asn) ligase of Prochlorococcus marinus subsp. pastoris (strain CCMP1986 / NIES-2087 / MED4).